We begin with the raw amino-acid sequence, 335 residues long: Nucleoid-associated protein YejK (335 aa).

This sequence belongs to the YejK family.

It is found in the cytoplasm. The protein localises to the nucleoid. The chain is Nucleoid-associated protein YejK from Escherichia coli (strain K12 / MC4100 / BW2952).